Consider the following 768-residue polypeptide: MDRSRVLEQLIPELTGLLSLLDHEYLSDSTLEKKMAVASLLQSLQPLPAKEVSFLYVNTADLHSGPSFVESLFEEFDCDLGDLRDMSDDGEPSKGASPEPTKSPSLRSAAADVPPPLPNKPPPEDYYEEALPLGPGKSPEYISSHNGCSPAQSIVDGYYEDADNSYPTTRMNGELKNSYNDSDAMSSSYESYDEEEEEEKGRQPKHQWPSEEASMHLVRDCRICAFLLRKKRFGQWAKQLTVIKEEQLLCYKSSKDRQPHLRLALDVCTVIYVPKDSRHKRHELRFSQGATEVLVLALQSREQAEEWLKVIREVSRPIVGAEGLEVPRSPVILCKADQDKRLSQEKQNSDSDSLGMNDSGSTLGRREACEHGKGKKNSLAELKGSMSRAAGRKITRIISFSKKKALSEDLQTFSSEDEVPCCGYLNVLVNQGWKERWCRLRCNTLYFHKDRTDLHTHVNSIALRGCEVAPGFGPRHPFAFRILRNRQEVAILEASCSEDMGRWLGLLLVEMGSKVTPEALHYDYVDVETLTSIVSAGRNSFLYAQSCQDQWPEPRIYDEVPYEKVQDEEPQRPTGAQVKRHASSCSEKSHRADPQVKVKRHASSANQYKYGKNRAEEDARRYLVEKERLEKEKETIRTELTALRQEKKELKEAIRNNPGAKSKALEEAVATLEAQCRAKEEQRIDLELKLVAVKERLQQSLAGGPALGLSVSNKNKSQDTTNKPQSNAPEQSLPVNCVSELRKRSPSIVTSNQGRVLQKAKEWEMKKT.

The disordered stretch occupies residues 83-145 (LRDMSDDGEP…GKSPEYISSH (63 aa)). 5 positions are modified to phosphoserine: S87, S93, S97, S103, and S153. The span at 165–185 (SYPTTRMNGELKNSYNDSDAM) shows a compositional bias: polar residues. A disordered region spans residues 165–211 (SYPTTRMNGELKNSYNDSDAMSSSYESYDEEEEEEKGRQPKHQWPSE). Residues 220-316 (DCRICAFLLR…WLKVIREVSR (97 aa)) form the PH 1 domain. Residues S329 and S343 each carry the phosphoserine modification. Basic and acidic residues predominate over residues 340-349 (KRLSQEKQNS). Residues 340 to 382 (KRLSQEKQNSDSDSLGMNDSGSTLGRREACEHGKGKKNSLAEL) are disordered. Residues 350–362 (DSDSLGMNDSGST) are compositionally biased toward polar residues. In terms of domain architecture, PH 2 spans 418 to 512 (EVPCCGYLNV…WLGLLLVEMG (95 aa)). Y557 bears the Phosphotyrosine mark. Residues 564–609 (KVQDEEPQRPTGAQVKRHASSCSEKSHRADPQVKVKRHASSANQYK) are disordered. Over residues 587 to 596 (EKSHRADPQV) the composition is skewed to basic and acidic residues. The stretch at 611–701 (GKNRAEEDAR…AVKERLQQSL (91 aa)) forms a coiled coil. Residues 705 to 768 (PALGLSVSNK…KAKEWEMKKT (64 aa)) are disordered. Polar residues predominate over residues 710-734 (SVSNKNKSQDTTNKPQSNAPEQSLP). S747 is subject to Phosphoserine. Basic and acidic residues predominate over residues 759–768 (KAKEWEMKKT).

Interacts with CTTN.

The protein localises to the cytoplasm. It localises to the cell projection. It is found in the podosome. The protein resides in the invadopodium. Its subcellular location is the cytoskeleton. The protein localises to the stress fiber. May be involved in podosome and invadosome formation. The sequence is that of Actin filament-associated protein 1-like 1 (Afap1l1) from Mus musculus (Mouse).